Reading from the N-terminus, the 467-residue chain is Light-independent protochlorophyllide reductase subunit N (467 aa).

[4Fe-4S] cluster contacts are provided by cysteine 22, cysteine 47, and cysteine 107.

It belongs to the BchN/ChlN family. As to quaternary structure, protochlorophyllide reductase is composed of three subunits; ChlL, ChlN and ChlB. Forms a heterotetramer of two ChlB and two ChlN subunits. The cofactor is [4Fe-4S] cluster.

Its subcellular location is the plastid. The protein localises to the chloroplast. The enzyme catalyses chlorophyllide a + oxidized 2[4Fe-4S]-[ferredoxin] + 2 ADP + 2 phosphate = protochlorophyllide a + reduced 2[4Fe-4S]-[ferredoxin] + 2 ATP + 2 H2O. The protein operates within porphyrin-containing compound metabolism; chlorophyll biosynthesis (light-independent). Its function is as follows. Component of the dark-operative protochlorophyllide reductase (DPOR) that uses Mg-ATP and reduced ferredoxin to reduce ring D of protochlorophyllide (Pchlide) to form chlorophyllide a (Chlide). This reaction is light-independent. The NB-protein (ChlN-ChlB) is the catalytic component of the complex. This chain is Light-independent protochlorophyllide reductase subunit N, found in Pinus thunbergii (Japanese black pine).